Reading from the N-terminus, the 407-residue chain is Accessory Sec system protein translocase subunit SecY2 (407 aa).

Helical transmembrane passes span 13 to 33 (FLWT…TLPF), 65 to 85 (FFSI…MFTV), 104 to 124 (MLLT…NLPL), 133 to 153 (GTIV…LIWL), 158 to 178 (SSMG…SYIP), 192 to 212 (PLIL…AVLV), 248 to 268 (IMYA…LLFF), 287 to 307 (IPWF…FAFI), 345 to 365 (FAFV…LLIF), and 370 to 390 (YMRL…VFSI).

Belongs to the SecY/SEC61-alpha family. SecY2 subfamily. As to quaternary structure, may form heterotrimers with SecE and SecG subunits (Potential). Component of the accessory SecA2/SecY2 protein translocase complex required to export cell wall protein GspB.

Its subcellular location is the cell membrane. Its function is as follows. The central subunit of a protein translocation channel (Potential). Part of the accessory SecA2/SecY2 system specifically required to export GspB, a serine-rich repeat cell wall protein encoded upstream in the same operon. This chain is Accessory Sec system protein translocase subunit SecY2, found in Streptococcus gordonii.